Here is a 174-residue protein sequence, read N- to C-terminus: NADH-ubiquinone oxidoreductase chain 6 (174 aa).

6 helical membrane-spanning segments follow: residues 1–21 (MTYA…GFSS), 24–44 (SPIY…AIIL), 47–67 (GGGY…MVVF), 86–106 (VEVL…VLWV), 111–131 (GMVV…EGEG), and 151–171 (WLVV…IEIA).

It belongs to the complex I subunit 6 family. As to quaternary structure, core subunit of respiratory chain NADH dehydrogenase (Complex I) which is composed of 45 different subunits.

Its subcellular location is the mitochondrion inner membrane. It catalyses the reaction a ubiquinone + NADH + 5 H(+)(in) = a ubiquinol + NAD(+) + 4 H(+)(out). Core subunit of the mitochondrial membrane respiratory chain NADH dehydrogenase (Complex I) which catalyzes electron transfer from NADH through the respiratory chain, using ubiquinone as an electron acceptor. Essential for the catalytic activity and assembly of complex I. This chain is NADH-ubiquinone oxidoreductase chain 6 (MT-ND6), found in Pan troglodytes (Chimpanzee).